The primary structure comprises 112 residues: uncharacterized protein (112 aa).

2 coiled-coil regions span residues A15–F53 and L86–K103.

This is an uncharacterized protein from Aquifex aeolicus (strain VF5).